A 148-amino-acid chain; its full sequence is UPF0260 protein ESA_01462 (148 aa).

It belongs to the UPF0260 family.

The polypeptide is UPF0260 protein ESA_01462 (Cronobacter sakazakii (strain ATCC BAA-894) (Enterobacter sakazakii)).